Reading from the N-terminus, the 249-residue chain is Glutathione S-transferase tcpG (249 aa).

In terms of domain architecture, GST N-terminal spans 20-109; the sequence is LYVRKAIPAP…YLCDKHDKDG (90 aa). The 135-residue stretch at 115–249 folds into the GST C-terminal domain; the sequence is NATERAQVTS…TEEEIELHGR (135 aa).

It belongs to the GST superfamily.

It carries out the reaction RX + glutathione = an S-substituted glutathione + a halide anion + H(+). The protein operates within secondary metabolite biosynthesis. In terms of biological role, glutathione S-transferase; part of the gene cluster that mediates the biosynthesis of an unusual class of epipolythiodioxopiperazines (ETPs) lacking the reactive thiol group important for toxicity. Firstly, L-tyrosine is prenylated by tcpD, before undergoing condensation with L-glycine in a reaction catalyzed by the NRPS tcpP leading to the diketopiperazine (DKP) backbone. Afterwards the alpha-carbon of tyrosine is oxidized by the cytochrome P450 tcpC to form a hydroxyl group. However, in contrast other ETP biosynthesis pathways studied so far, tcpC is not able to bishydroxylate the DKP at both alpha-carbon positions, but hydroxylates the alpha-carbon of the tyrosine part and the nitrogen of the glycine part. The next steps involve an alpha,beta-elimination reaction catalyzed by tcpI, a methylation by the methyltransferase tcpN the action of the four enzyme cascade tcpG/K/J/I. Due to a dysfunctional cytochrome P450 monooxygenase tcpC, the pathway leads to the biosynthesis of probable non-toxic metabolites lacking the reactive thiol group. The chain is Glutathione S-transferase tcpG from Claviceps purpurea (strain 20.1) (Ergot fungus).